The primary structure comprises 235 residues: Vinculin (235 aa).

Belongs to the vinculin/alpha-catenin family. In terms of assembly, exhibits self-association properties. Phosphorylated on serines, threonines and tyrosines. Post-translationally, acetylated by myristic acid and/or palmitic acid.

The protein resides in the cell membrane. It localises to the cell junction. The protein localises to the adherens junction. Its subcellular location is the focal adhesion. It is found in the cytoplasm. The protein resides in the cytoskeleton. It localises to the sarcolemma. The protein localises to the cell projection. Its subcellular location is the podosome. In terms of biological role, involved in cell adhesion. May be involved in the attachment of the actin-based microfilaments to the plasma membrane. The polypeptide is Vinculin (vcl) (Xenopus laevis (African clawed frog)).